The sequence spans 232 residues: Uracil-DNA glycosylase (232 aa).

Aspartate 71 serves as the catalytic Proton acceptor.

This sequence belongs to the uracil-DNA glycosylase (UDG) superfamily. UNG family.

Its subcellular location is the cytoplasm. The enzyme catalyses Hydrolyzes single-stranded DNA or mismatched double-stranded DNA and polynucleotides, releasing free uracil.. Its function is as follows. Excises uracil residues from the DNA which can arise as a result of misincorporation of dUMP residues by DNA polymerase or due to deamination of cytosine. The sequence is that of Uracil-DNA glycosylase from Azotobacter vinelandii (strain DJ / ATCC BAA-1303).